Reading from the N-terminus, the 181-residue chain is Large ribosomal subunit protein uL6m (181 aa).

The protein belongs to the universal ribosomal protein uL6 family.

Its subcellular location is the mitochondrion. This Acanthamoeba castellanii (Amoeba) protein is Large ribosomal subunit protein uL6m (RPL6).